Here is a 332-residue protein sequence, read N- to C-terminus: L-lactate dehydrogenase A chain (332 aa).

NAD(+)-binding positions include 29 to 57 (GAVGMACAISILMKDLADELALVDVIEDK) and arginine 99. Substrate is bound by residues arginine 106, asparagine 138, and arginine 169. Asparagine 138 is a binding site for NAD(+). Histidine 193 functions as the Proton acceptor in the catalytic mechanism. Threonine 248 contributes to the substrate binding site.

It belongs to the LDH/MDH superfamily. LDH family. As to quaternary structure, homotetramer.

It is found in the cytoplasm. It catalyses the reaction (S)-lactate + NAD(+) = pyruvate + NADH + H(+). It functions in the pathway fermentation; pyruvate fermentation to lactate; (S)-lactate from pyruvate: step 1/1. Functionally, interconverts simultaneously and stereospecifically pyruvate and lactate with concomitant interconversion of NADH and NAD(+). In Sceloporus woodi (Florida scrub lizard), this protein is L-lactate dehydrogenase A chain (LDHA).